We begin with the raw amino-acid sequence, 328 residues long: Nickel import system permease protein NikB (328 aa).

6 helical membrane-spanning segments follow: residues 11–31 (LMQMIVVLFVISTLTFILMKL), 104–124 (LLISFSTLVVSLCISIPLGII), 139–159 (VISTLSISLPAFFIGIILLFI), 170–190 (ILSQFILPVITLSLGMCAYII), 229–249 (ILPIIPLLGISLGSLIGGTVV), and 279–299 (VLFIGFFVVIINTIADLLTLL). Residues 100–297 (APITLLISFS…IINTIADLLT (198 aa)) form the ABC transmembrane type-1 domain.

This sequence belongs to the binding-protein-dependent transport system permease family. OppBC subfamily. As to quaternary structure, the complex is composed of two ATP-binding proteins (NikD and NikE), two transmembrane proteins (NikB and NikC) and a solute-binding protein (NikA).

The protein resides in the cell membrane. In terms of biological role, part of the ABC transporter complex NikABCDE (Opp2) involved in nickel import. Probably responsible for the translocation of the substrate across the membrane. The sequence is that of Nickel import system permease protein NikB from Staphylococcus aureus (strain MSSA476).